Consider the following 728-residue polypeptide: 1,4-alpha-glucan branching enzyme GlgB (728 aa).

The active-site Nucleophile is D405. E458 acts as the Proton donor in catalysis.

This sequence belongs to the glycosyl hydrolase 13 family. GlgB subfamily. As to quaternary structure, monomer.

The enzyme catalyses Transfers a segment of a (1-&gt;4)-alpha-D-glucan chain to a primary hydroxy group in a similar glucan chain.. Its pathway is glycan biosynthesis; glycogen biosynthesis. Its function is as follows. Catalyzes the formation of the alpha-1,6-glucosidic linkages in glycogen by scission of a 1,4-alpha-linked oligosaccharide from growing alpha-1,4-glucan chains and the subsequent attachment of the oligosaccharide to the alpha-1,6 position. The chain is 1,4-alpha-glucan branching enzyme GlgB from Escherichia coli O6:H1 (strain CFT073 / ATCC 700928 / UPEC).